The sequence spans 329 residues: Ig gamma-2 chain C region (329 aa).

Intrachain disulfides connect C28-C79, C142-C202, and C248-C308. N178 carries an N-linked (GlcNAc...) asparagine glycan.

It is found in the secreted. This Cavia porcellus (Guinea pig) protein is Ig gamma-2 chain C region.